Here is a 276-residue protein sequence, read N- to C-terminus: NH(3)-dependent NAD(+) synthetase (276 aa).

51–58 (GISGGVDS) contributes to the ATP binding site. Position 57 (D57) interacts with Mg(2+). R148 serves as a coordination point for deamido-NAD(+). Residue T168 participates in ATP binding. E173 is a Mg(2+) binding site. Residues K181 and D188 each coordinate deamido-NAD(+). Residues K197 and T219 each contribute to the ATP site. 268-269 (HK) serves as a coordination point for deamido-NAD(+).

This sequence belongs to the NAD synthetase family. Homodimer.

It catalyses the reaction deamido-NAD(+) + NH4(+) + ATP = AMP + diphosphate + NAD(+) + H(+). It functions in the pathway cofactor biosynthesis; NAD(+) biosynthesis; NAD(+) from deamido-NAD(+) (ammonia route): step 1/1. Its function is as follows. Catalyzes the ATP-dependent amidation of deamido-NAD to form NAD. Uses ammonia as a nitrogen source. The sequence is that of NH(3)-dependent NAD(+) synthetase from Streptomyces coelicolor (strain ATCC BAA-471 / A3(2) / M145).